A 403-amino-acid polypeptide reads, in one-letter code: 26S proteasome regulatory subunit 6B homolog (403 aa).

N-acetylmethionine is present on Met-1. An ATP-binding site is contributed by 191 to 198 (GPPGTGKT).

The protein belongs to the AAA ATPase family.

The protein resides in the cytoplasm. It is found in the nucleus. Its function is as follows. The 26S proteasome is involved in the ATP-dependent degradation of ubiquitinated proteins. The regulatory (or ATPase) complex confers ATP dependency and substrate specificity to the 26S complex. The protein is 26S proteasome regulatory subunit 6B homolog (psmC4) of Dictyostelium discoideum (Social amoeba).